The following is a 479-amino-acid chain: Monodehydroascorbate reductase 1, peroxisomal (479 aa).

Over 1–3 (MGR) the chain is Cytoplasmic. A helical transmembrane segment spans residues 4-24 (AFEYVILGGGVAAGYAALEFV). FAD contacts are provided by residues 12–15 (GGVA), Glu-41, Arg-48, Lys-53, and 147–148 (RN). The Peroxisomal portion of the chain corresponds to 25-445 (RRNGGASSQE…QATGGGGKPT (421 aa)). NAD(+) is bound by residues 172–178 (GGYIGME), Arg-202, and Gly-260. Residues 174 to 178 (YIGME), Arg-202, and Gly-260 contribute to the NADP(+) site. Residue Asp-297 participates in FAD binding. 314–315 (EH) lines the NAD(+) pocket. 314–315 (EH) contributes to the NADP(+) binding site. Val-316 is a binding site for FAD. An L-ascorbate-binding site is contributed by Arg-320. Position 347 (Tyr-347) interacts with FAD. Tyr-347 contributes to the NAD(+) binding site. Tyr-347 contributes to the NADP(+) binding site. Arg-349 contributes to the L-ascorbate binding site. The chain crosses the membrane as a helical span at residues 446–466 (CAWHATVGVAAAVSIAAFACW). The Cytoplasmic segment spans residues 467 to 479 (YGWQAPYVLKRDF).

This sequence belongs to the FAD-dependent oxidoreductase family. FAD is required as a cofactor.

It is found in the peroxisome membrane. It carries out the reaction 2 monodehydro-L-ascorbate radical + NADH + H(+) = 2 L-ascorbate + NAD(+). Catalyzes the conversion of monodehydroascorbate to ascorbate, oxidizing NADH in the process. Ascorbate is a major antioxidant against reactive oxygen species (ROS) and nitric oxide (NO). The polypeptide is Monodehydroascorbate reductase 1, peroxisomal (Oryza sativa subsp. japonica (Rice)).